The chain runs to 427 residues: Gamma-glutamyl phosphate reductase (427 aa).

Belongs to the gamma-glutamyl phosphate reductase family.

It localises to the cytoplasm. The catalysed reaction is L-glutamate 5-semialdehyde + phosphate + NADP(+) = L-glutamyl 5-phosphate + NADPH + H(+). The protein operates within amino-acid biosynthesis; L-proline biosynthesis; L-glutamate 5-semialdehyde from L-glutamate: step 2/2. Its function is as follows. Catalyzes the NADPH-dependent reduction of L-glutamate 5-phosphate into L-glutamate 5-semialdehyde and phosphate. The product spontaneously undergoes cyclization to form 1-pyrroline-5-carboxylate. The protein is Gamma-glutamyl phosphate reductase of Streptomyces griseus subsp. griseus (strain JCM 4626 / CBS 651.72 / NBRC 13350 / KCC S-0626 / ISP 5235).